A 422-amino-acid polypeptide reads, in one-letter code: SH2 domain-containing protein 4A (422 aa).

A phosphoserine mark is found at Ser117 and Ser123. 2 disordered regions span residues 141–190 and 202–282; these read PQNV…EDEK and SEWQ…VIRT. Composition is skewed to basic and acidic residues over residues 163 to 190 and 212 to 231; these read TKKD…EDEK and KAAD…DYKR. A Phosphoserine modification is found at Ser233. The SH2 domain maps to 316-408; the sequence is WFHGILTLKK…LGKELLLFPC (93 aa).

As to quaternary structure, interacts with ESR1.

It localises to the cytoplasm. Functionally, inhibits estrogen-induced cell proliferation by competing with PLCG for binding to ESR1, blocking the effect of estrogen on PLCG and repressing estrogen-induced proliferation. May play a role in T-cell development and function. This chain is SH2 domain-containing protein 4A (Sh2d4a), found in Rattus norvegicus (Rat).